A 508-amino-acid chain; its full sequence is Glucose-1-phosphate adenylyltransferase small subunit 1, chloroplastic (508 aa).

Residues 1-27 (MSSIVTSGVINVPRSSSSSKNLSFSSS) form a disordered region. The transit peptide at 1–59 (MSSIVTSGVINVPRSSSSSKNLSFSSSSQLSGNKILTVSGNGAPRGRCTLKHVFLTPKA) directs the protein to the chloroplast. Positions 15 to 27 (SSSSSKNLSFSSS) are enriched in low complexity.

It belongs to the bacterial/plant glucose-1-phosphate adenylyltransferase family. As to quaternary structure, heterotetramer. Seeds.

It is found in the plastid. It localises to the chloroplast. The catalysed reaction is alpha-D-glucose 1-phosphate + ATP + H(+) = ADP-alpha-D-glucose + diphosphate. It functions in the pathway glycan biosynthesis; starch biosynthesis. Activated by 3'phosphoglycerate, inhibited by orthophosphate. Allosteric regulation. In terms of biological role, this protein plays a role in synthesis of starch. It catalyzes the synthesis of the activated glycosyl donor, ADP-glucose from Glc-1-P and ATP. In Vicia faba (Broad bean), this protein is Glucose-1-phosphate adenylyltransferase small subunit 1, chloroplastic (AGPC).